The chain runs to 1491 residues: Chromosome partition protein MukB (1491 aa).

ATP is bound at residue 34–41; that stretch reads GGNGAGKS. Coiled coils occupy residues 302–418, 488–600, 638–666, 781–806, 836–1109, and 1210–1239; these read LIEQ…QYQQ, EVAR…RFES, ELEK…RLAS, RAAR…AKAS, EQAL…DLRT, and VEAI…ISSD. The tract at residues 667–784 is flexible hinge; sequence PGGSNDPRLK…AIPLFGRAAR (118 aa). Residues 1059-1080 are disordered; sequence QRRRDELQERLHTSRSRKSEYE.

It belongs to the SMC family. MukB subfamily. Homodimerization via its hinge domain. Binds to DNA via its C-terminal region. Interacts, and probably forms a ternary complex, with MukE and MukF via its C-terminal region. The complex formation is stimulated by calcium or magnesium. Interacts with tubulin-related protein FtsZ.

It is found in the cytoplasm. It localises to the nucleoid. Its function is as follows. Plays a central role in chromosome condensation, segregation and cell cycle progression. Functions as a homodimer, which is essential for chromosome partition. Involved in negative DNA supercoiling in vivo, and by this means organize and compact chromosomes. May achieve or facilitate chromosome segregation by condensation DNA from both sides of a centrally located replisome during cell division. The protein is Chromosome partition protein MukB of Vibrio cholerae serotype O1 (strain ATCC 39541 / Classical Ogawa 395 / O395).